Consider the following 701-residue polypeptide: MADLSKYRNIGIFAHVDAGKTTTTERILKLTGQIHKTGEVHDGESTTDFMEQEAERGITIQSAAVSCFWNDHRFNVIDTPGHVDFTVEVYRSLKVLDGGVGVFCGSGGVEPQSETNWRYANDSKVARIIMVNKLDRLGADFYRVCKQVKDVLGANPLIMTLPIGTEDEFVGVVDLLSEKAYIWDDTGLPENYEVTDIPADMVEQAAEYRVKLIETALEVDEDMLMEFLEGEMVPTIEQIKACIRTGTRDMTFFPTYGASAFKNKGIQLILDAVVDYLPSPTDVNPQPLTDEEGTPNGEFAIVSADETFKALAFKITDDRFGTLTFVRIYSGTLKKGDTILNAATGKTERVGRMCEMQADDRNELTSAQAGDIIAIVGMKSNVQTGHTLCDPKHPIVLEAMVFPKPVISISVTPKDKGSTEKMGLAIGKMVAEDPTFKVETDIDSGETILSGMGELHLDIKVDILKRTYGVELEVGKPQVAYRETITTAIEDSYTHKKQSGGSGQFGKIDYRIKPGEPGSGFVFSSVVVGGNVPKEFFPAIEKGFKGMMDTGVLAGFPVLDVEIELYDGGFHAVDSSAVAFELAARGAFRQSIPKAGAQLIEPIMKVDVFTPDDHVGDVIGDLNRRRGMIGGQEAGVSGVRIKADVPLSEMFGYIGTLRTMTSGRGQFSMEFSHYMPCPNNVAEIVIAEVKAAKIAKDAARK.

Residues 5–281 (SKYRNIGIFA…AVVDYLPSPT (277 aa)) enclose the tr-type G domain. GTP contacts are provided by residues 14–21 (AHVDAGKT), 78–82 (DTPGH), and 132–135 (NKLD).

Belongs to the TRAFAC class translation factor GTPase superfamily. Classic translation factor GTPase family. EF-G/EF-2 subfamily.

Its subcellular location is the cytoplasm. Functionally, catalyzes the GTP-dependent ribosomal translocation step during translation elongation. During this step, the ribosome changes from the pre-translocational (PRE) to the post-translocational (POST) state as the newly formed A-site-bound peptidyl-tRNA and P-site-bound deacylated tRNA move to the P and E sites, respectively. Catalyzes the coordinated movement of the two tRNA molecules, the mRNA and conformational changes in the ribosome. The sequence is that of Elongation factor G 1 from Colwellia psychrerythraea (strain 34H / ATCC BAA-681) (Vibrio psychroerythus).